A 511-amino-acid chain; its full sequence is Glucose-6-phosphate 1-dehydrogenase, cytoplasmic isoform (511 aa).

NADP(+) contacts are provided by residues 36–43, R71, Y151, and K178; that span reads GASGDLAK. D-glucose 6-phosphate-binding positions include K178, 208-212, E246, and D265; that span reads HYLGK. H270 serves as the catalytic Proton acceptor. K353 lines the NADP(+) pocket. Residues K356 and R361 each contribute to the D-glucose 6-phosphate site. K362, R366, and R390 together coordinate NADP(+). Residue Q392 coordinates D-glucose 6-phosphate. NADP(+)-binding positions include 398–400, 418–420, R484, and W506; these read YMK and DLS.

It belongs to the glucose-6-phosphate dehydrogenase family. As to quaternary structure, homotetramer. Found in tubers, stolons, roots, and flower buds.

It is found in the cytoplasm. It carries out the reaction D-glucose 6-phosphate + NADP(+) = 6-phospho-D-glucono-1,5-lactone + NADPH + H(+). The protein operates within carbohydrate degradation; pentose phosphate pathway; D-ribulose 5-phosphate from D-glucose 6-phosphate (oxidative stage): step 1/3. With respect to regulation, regulated by metabolites. In terms of biological role, catalyzes the rate-limiting step of the oxidative pentose-phosphate pathway, which represents a route for the dissimilation of carbohydrates besides glycolysis. The main function of this enzyme is to generate NADPH for reductive biosyntheses. The sequence is that of Glucose-6-phosphate 1-dehydrogenase, cytoplasmic isoform (G6PDH) from Solanum tuberosum (Potato).